The primary structure comprises 117 residues: Ribosome-binding factor A (117 aa).

The protein belongs to the RbfA family. Monomer. Binds 30S ribosomal subunits, but not 50S ribosomal subunits or 70S ribosomes.

Its subcellular location is the cytoplasm. One of several proteins that assist in the late maturation steps of the functional core of the 30S ribosomal subunit. Associates with free 30S ribosomal subunits (but not with 30S subunits that are part of 70S ribosomes or polysomes). Required for efficient processing of 16S rRNA. May interact with the 5'-terminal helix region of 16S rRNA. The sequence is that of Ribosome-binding factor A from Streptococcus suis (strain 98HAH33).